A 336-amino-acid chain; its full sequence is Anthranilate phosphoribosyltransferase (336 aa).

5-phospho-alpha-D-ribose 1-diphosphate is bound by residues Gly-82, 85–86, Thr-90, 92–95, 110–118, and Ser-122; these read GD, NIST, and KHGNRFASG. Gly-82 contacts anthranilate. Ser-94 is a Mg(2+) binding site. Asn-113 provides a ligand contact to anthranilate. Position 168 (Arg-168) interacts with anthranilate. Mg(2+) is bound by residues Asp-227 and Glu-228.

This sequence belongs to the anthranilate phosphoribosyltransferase family. In terms of assembly, homodimer. The cofactor is Mg(2+).

It carries out the reaction N-(5-phospho-beta-D-ribosyl)anthranilate + diphosphate = 5-phospho-alpha-D-ribose 1-diphosphate + anthranilate. It functions in the pathway amino-acid biosynthesis; L-tryptophan biosynthesis; L-tryptophan from chorismate: step 2/5. Functionally, catalyzes the transfer of the phosphoribosyl group of 5-phosphorylribose-1-pyrophosphate (PRPP) to anthranilate to yield N-(5'-phosphoribosyl)-anthranilate (PRA). The protein is Anthranilate phosphoribosyltransferase of Desulfitobacterium hafniense (strain Y51).